The primary structure comprises 124 residues: Large ribosomal subunit protein bL12 (124 aa).

The protein belongs to the bacterial ribosomal protein bL12 family. Homodimer. Part of the ribosomal stalk of the 50S ribosomal subunit. Forms a multimeric L10(L12)X complex, where L10 forms an elongated spine to which 2 to 4 L12 dimers bind in a sequential fashion. Binds GTP-bound translation factors.

Functionally, forms part of the ribosomal stalk which helps the ribosome interact with GTP-bound translation factors. Is thus essential for accurate translation. In Burkholderia cenocepacia (strain HI2424), this protein is Large ribosomal subunit protein bL12.